Reading from the N-terminus, the 299-residue chain is Fluorinase (299 aa).

S-adenosyl-L-methionine contacts are provided by residues D15, 20–22 (DDS), Y76, S157, D210, N215, 269–270 (SR), and 277–279 (RNA).

The protein belongs to the SAM hydrolase / SAM-dependent halogenase family.

The enzyme catalyses fluoride + S-adenosyl-L-methionine = 5'-deoxy-5'-fluoroadenosine + L-methionine. Its activity is regulated as follows. Activity is not severely affected by most metal ions (Mg(2+), Mn(2+), Co(2+) and Fe(2+)), but both Cu(2+) and Zn(2+) are strong inhibitors. Its function is as follows. Catalyzes the formation of a C-F bond by combining S-adenosyl-L-methionine (SAM) and fluoride to generate 5'-fluoro-5'-deoxyadenosine (5'-FDA) and L-methionine. This chain is Fluorinase, found in Actinopolyspora mzabensis.